A 182-amino-acid chain; its full sequence is Early nodulin-like protein 14 (182 aa).

Residues 1–28 (MFLSASMASSSLHVAIFSLIFLFSLAAA) form the signal peptide. Positions 29 to 133 (NEVTVGGKSG…GQKLSLVVIS (105 aa)) constitute a Phytocyanin domain. Residues Cys-87 and Cys-121 are joined by a disulfide bond. N-linked (GlcNAc...) asparagine glycans are attached at residues Asn-88 and Asn-95. The GPI-anchor amidated serine moiety is linked to residue Ser-160. A propeptide spans 161-182 (GSVRLGGCYVVLGLVLGLCAWF) (removed in mature form).

The protein belongs to the early nodulin-like (ENODL) family. In terms of assembly, interacts strongly and specifically with the extracellular domain of FERONIA at the synergid cell surface. In terms of tissue distribution, mostly expressed in seedlings and flowers, and, to a lower extent, in roots, stems and seeds, but barely in leaves.

The protein localises to the cell membrane. In terms of biological role, may act as a carbohydrate transporter. Required, together with ENODL11, ENODL12, ENODL13, ENODL14 and ENODL15, for male-female communication and pollen tube reception and burst at the synergid cell surface of the female gametophyte. The sequence is that of Early nodulin-like protein 14 from Arabidopsis thaliana (Mouse-ear cress).